The following is a 397-amino-acid chain: 2-aminoadipate transaminase (397 aa).

A substrate-binding site is contributed by G40. Residues Y70, S100 to Q101, N174, D202 to Y205, S235 to S237, and R245 each bind pyridoxal 5'-phosphate. N174 provides a ligand contact to substrate. K263 is modified (N6-(pyridoxal phosphate)lysine). Substrate is bound at residue R368.

This sequence belongs to the class-I pyridoxal-phosphate-dependent aminotransferase family. Homodimer. Pyridoxal 5'-phosphate is required as a cofactor.

It carries out the reaction L-2-aminoadipate + 2-oxoglutarate = 2-oxoadipate + L-glutamate. It functions in the pathway amino-acid biosynthesis; L-lysine biosynthesis via AAA pathway; L-alpha-aminoadipate from 2-oxoglutarate: step 5/5. In terms of biological role, catalyzes the transfer of an amino group between 2-oxoadipate (2-OA) and glutamate (Glu) to yield alpha-aminodipate (AAA). It can also transaminate glutamate, leucine, and aromatic amino acids. It also contributes in the biosynthesis of other amino acids such as leucine. This Thermus thermophilus (strain ATCC BAA-163 / DSM 7039 / HB27) protein is 2-aminoadipate transaminase (lysN).